We begin with the raw amino-acid sequence, 216 residues long: Large ribosomal subunit protein uL24m (216 aa).

A mitochondrion-targeting transit peptide spans 1–9 (MRLTALLSM). Residues 56–89 (VVRGDTVEVLSGKEKGKQGKVAQVIRARNWVILE) form the KOW domain. Residues 167 to 186 (PQQWKDGPKDTSPEDTLQKT) form a disordered region.

This sequence belongs to the universal ribosomal protein uL24 family. Component of the mitochondrial ribosome large subunit (39S) which comprises a 16S rRNA and about 50 distinct proteins.

It is found in the mitochondrion. The protein is Large ribosomal subunit protein uL24m (mrpl24) of Danio rerio (Zebrafish).